The primary structure comprises 229 residues: Phosphoglycolate phosphatase (229 aa).

Residue Asp-13 is the Nucleophile of the active site. Residues Asp-13, Asp-15, and Asp-178 each coordinate Mg(2+).

Belongs to the HAD-like hydrolase superfamily. CbbY/CbbZ/Gph/YieH family. The cofactor is Mg(2+).

It carries out the reaction 2-phosphoglycolate + H2O = glycolate + phosphate. It functions in the pathway organic acid metabolism; glycolate biosynthesis; glycolate from 2-phosphoglycolate: step 1/1. Specifically catalyzes the dephosphorylation of 2-phosphoglycolate. Is involved in the dissimilation of the intracellular 2-phosphoglycolate formed during the DNA repair of 3'-phosphoglycolate ends, a major class of DNA lesions induced by oxidative stress. The protein is Phosphoglycolate phosphatase of Photobacterium profundum (strain SS9).